The chain runs to 402 residues: Dihydrolipoyllysine-residue acetyltransferase component of pyruvate dehydrogenase complex (402 aa).

A Lipoyl-binding domain is found at 2-77 (ANEFKFTDVG…HIGQVMAVID (76 aa)). Residue Lys-43 is modified to N6-lipoyllysine. Disordered regions lie at residues 82-110 (AAAPAAPQPVSAPAPAPTPTFTPTPAPVT) and 143-172 (PQPTPAPVVQPTSAPTPTPAPASAAAPSGE). 2 stretches are compositionally biased toward pro residues: residues 87 to 107 (APQPVSAPAPAPTPTFTPTPA) and 143 to 162 (PQPTPAPVVQPTSAPTPTPA). His-374 is a catalytic residue.

This sequence belongs to the 2-oxoacid dehydrogenase family. In terms of assembly, forms a 24-polypeptide structural core with octahedral symmetry. It depends on (R)-lipoate as a cofactor.

It carries out the reaction N(6)-[(R)-dihydrolipoyl]-L-lysyl-[protein] + acetyl-CoA = N(6)-[(R)-S(8)-acetyldihydrolipoyl]-L-lysyl-[protein] + CoA. In terms of biological role, the pyruvate dehydrogenase complex catalyzes the overall conversion of pyruvate to acetyl-CoA and CO(2). It contains multiple copies of three enzymatic components: pyruvate dehydrogenase (E1), dihydrolipoamide acetyltransferase (E2) and lipoamide dehydrogenase (E3). The protein is Dihydrolipoyllysine-residue acetyltransferase component of pyruvate dehydrogenase complex (pdhC) of Mycoplasma pneumoniae (strain ATCC 29342 / M129 / Subtype 1) (Mycoplasmoides pneumoniae).